Consider the following 114-residue polypeptide: Small ribosomal subunit protein uS17 (114 aa).

The protein belongs to the universal ribosomal protein uS17 family. In terms of assembly, part of the 30S ribosomal subunit.

Functionally, one of the primary rRNA binding proteins, it binds specifically to the 5'-end of 16S ribosomal RNA. This chain is Small ribosomal subunit protein uS17, found in Saccharolobus solfataricus (strain ATCC 35092 / DSM 1617 / JCM 11322 / P2) (Sulfolobus solfataricus).